The following is a 171-amino-acid chain: uncharacterized protein (171 aa).

A helical membrane pass occupies residues 21-43 (GVAASLLILLAVYTIFQSTVVIA).

It localises to the membrane. This is an uncharacterized protein from Archaeoglobus fulgidus (strain ATCC 49558 / DSM 4304 / JCM 9628 / NBRC 100126 / VC-16).